We begin with the raw amino-acid sequence, 147 residues long: Large ribosomal subunit protein bL9 (147 aa).

It belongs to the bacterial ribosomal protein bL9 family.

In terms of biological role, binds to the 23S rRNA. This Gemmatimonas aurantiaca (strain DSM 14586 / JCM 11422 / NBRC 100505 / T-27) protein is Large ribosomal subunit protein bL9.